The sequence spans 119 residues: MARVKRGVQARRRHKKILDLAKGYYNARRKVFRVAKQAVIKAQQYAYIGRKQKKRNFRSLWITRINAAARINGLSYSRFMNGLLKAGITLDRKVLADIAVHDAAGFAALAEKAKGALAA.

The protein belongs to the bacterial ribosomal protein bL20 family.

Binds directly to 23S ribosomal RNA and is necessary for the in vitro assembly process of the 50S ribosomal subunit. It is not involved in the protein synthesizing functions of that subunit. This is Large ribosomal subunit protein bL20 from Stenotrophomonas maltophilia (strain K279a).